Here is a 526-residue protein sequence, read N- to C-terminus: MQQKILILDFGSQYTQLIARRIREANVYCELHSWDVSDAFIREFNPAGVILSGGPNSVYEDETPRAPQSVFELGVPVLGICYGMQTMAAQLGGSVENAAKREFGYAEIRAQGHSALLKGIQDKSNAEGHGLLDVWMSHGDKVTALPEGFKIIASNSATPIAGMADENRRFYAVQFHPEVTHTKQGKALLNRFVHDICGCDQSWNMPDYVETAVQRIREEVGCDEVILGLSGGVDSSVAAALIHRAIGDQLTCVFVDNGLLRLNEAEQVMETFGKNLGVKVIHVDASAKFLGDLSGVNDPEAKRKIIGREFVEVFQQEAAKLPQAKWLAQGTIYPDVIESAGAKTKKAHTIKSHHNVGGLPDTLKLKLLEPLRELFKDEVRELGIALGLPHDMVYRHPFPGPGLGVRILGEVKREYADLLRQADHIFIEELRSTKDADGKSWYDKTSQAFAVFLPVKSVGVMGDGRTYDYVVALRAVVTTDFMTAHWAELPYDLLGKVSNRIINEVRGINRVVYDISGKPPATIEWE.

The Glutamine amidotransferase type-1 domain occupies 4 to 202 (KILILDFGSQ…VHDICGCDQS (199 aa)). The Nucleophile role is filled by Cys-81. Catalysis depends on residues His-176 and Glu-178. The GMPS ATP-PPase domain maps to 203–395 (WNMPDYVETA…LGLPHDMVYR (193 aa)). 230–236 (SGGVDSS) provides a ligand contact to ATP.

As to quaternary structure, homodimer.

The enzyme catalyses XMP + L-glutamine + ATP + H2O = GMP + L-glutamate + AMP + diphosphate + 2 H(+). It functions in the pathway purine metabolism; GMP biosynthesis; GMP from XMP (L-Gln route): step 1/1. Catalyzes the synthesis of GMP from XMP. This chain is GMP synthase [glutamine-hydrolyzing], found in Methylobacillus flagellatus (strain ATCC 51484 / DSM 6875 / VKM B-1610 / KT).